A 105-amino-acid chain; its full sequence is Nitrogen fixation nifHD region GlnB-like protein 1 (105 aa).

Belongs to the P(II) protein family.

In terms of biological role, could be involved in the regulation of nitrogen fixation. This Methanothermococcus thermolithotrophicus (Methanococcus thermolithotrophicus) protein is Nitrogen fixation nifHD region GlnB-like protein 1 (glnBA).